Reading from the N-terminus, the 402-residue chain is Type II NADH:quinone oxidoreductase (402 aa).

FAD contacts are provided by residues 12 to 16 (GAGYA), 39 to 40 (NK), and valine 83. Glutamate 172 is a catalytic residue. Residues aspartate 302, 319 to 320 (AQ), and lysine 379 each bind FAD.

The protein belongs to the NADH dehydrogenase family. Homodimer in solution. Forms homotetramers; dimer of dimers. Requires FAD as cofactor.

The protein localises to the cell membrane. It catalyses the reaction a quinone + NADH + H(+) = a quinol + NAD(+). The catalysed reaction is a menaquinone + NADH + H(+) = a menaquinol + NAD(+). The enzyme catalyses a ubiquinone + NADH + H(+) = a ubiquinol + NAD(+). Its activity is regulated as follows. Inhibited by HQNO, a quinone derivative. Its function is as follows. Alternative, nonproton pumping NADH:quinone oxidoreductase that delivers electrons to the respiratory chain by oxidation of NADH and reduction of quinones, and contributes to the regeneration of NAD(+). Can use DMN, a menaquinone analog, 2,3-dimethoxy-5,6-dimethyl-benzoquinone (DDB), an ubiquinone analog, or 2,3,5,6-tetramethyl-1,4-benzoquinone (Duroquinone, DQ) a plastoquinone analog as electron acceptors. The sequence is that of Type II NADH:quinone oxidoreductase from Staphylococcus aureus (strain NCTC 8325 / PS 47).